A 97-amino-acid polypeptide reads, in one-letter code: Aspartyl/glutamyl-tRNA(Asn/Gln) amidotransferase subunit C (97 aa).

This sequence belongs to the GatC family. In terms of assembly, heterotrimer of A, B and C subunits.

The catalysed reaction is L-glutamyl-tRNA(Gln) + L-glutamine + ATP + H2O = L-glutaminyl-tRNA(Gln) + L-glutamate + ADP + phosphate + H(+). It carries out the reaction L-aspartyl-tRNA(Asn) + L-glutamine + ATP + H2O = L-asparaginyl-tRNA(Asn) + L-glutamate + ADP + phosphate + 2 H(+). Allows the formation of correctly charged Asn-tRNA(Asn) or Gln-tRNA(Gln) through the transamidation of misacylated Asp-tRNA(Asn) or Glu-tRNA(Gln) in organisms which lack either or both of asparaginyl-tRNA or glutaminyl-tRNA synthetases. The reaction takes place in the presence of glutamine and ATP through an activated phospho-Asp-tRNA(Asn) or phospho-Glu-tRNA(Gln). The protein is Aspartyl/glutamyl-tRNA(Asn/Gln) amidotransferase subunit C of Prochlorococcus marinus (strain MIT 9301).